Reading from the N-terminus, the 130-residue chain is Small ribosomal subunit protein uS11 (130 aa).

The protein belongs to the universal ribosomal protein uS11 family. As to quaternary structure, part of the 30S ribosomal subunit. Interacts with proteins S7 and S18. Binds to IF-3.

Its function is as follows. Located on the platform of the 30S subunit, it bridges several disparate RNA helices of the 16S rRNA. Forms part of the Shine-Dalgarno cleft in the 70S ribosome. The protein is Small ribosomal subunit protein uS11 of Pseudoalteromonas atlantica (strain T6c / ATCC BAA-1087).